Consider the following 463-residue polypeptide: Siroheme synthase 1 (463 aa).

A precorrin-2 dehydrogenase /sirohydrochlorin ferrochelatase region spans residues 1–203; sequence MDFLPLFCQL…GQQQAAEESV (203 aa). NAD(+)-binding positions include 22 to 23 and 43 to 44; these read EV and PH. Serine 128 carries the phosphoserine modification. The tract at residues 215–463 is uroporphyrinogen-III C-methyltransferase; sequence GSVTLVGAGP…YGEANTLAGV (249 aa). Proline 224 is an S-adenosyl-L-methionine binding site. Aspartate 247 (proton acceptor) is an active-site residue. Lysine 269 serves as the catalytic Proton donor. S-adenosyl-L-methionine-binding positions include 300–302, isoleucine 305, 330–331, methionine 382, and glycine 411; these read GGD and TA.

This sequence in the N-terminal section; belongs to the precorrin-2 dehydrogenase / sirohydrochlorin ferrochelatase family. In the C-terminal section; belongs to the precorrin methyltransferase family.

The enzyme catalyses uroporphyrinogen III + 2 S-adenosyl-L-methionine = precorrin-2 + 2 S-adenosyl-L-homocysteine + H(+). The catalysed reaction is precorrin-2 + NAD(+) = sirohydrochlorin + NADH + 2 H(+). It catalyses the reaction siroheme + 2 H(+) = sirohydrochlorin + Fe(2+). The protein operates within cofactor biosynthesis; adenosylcobalamin biosynthesis; precorrin-2 from uroporphyrinogen III: step 1/1. It participates in cofactor biosynthesis; adenosylcobalamin biosynthesis; sirohydrochlorin from precorrin-2: step 1/1. Its pathway is porphyrin-containing compound metabolism; siroheme biosynthesis; precorrin-2 from uroporphyrinogen III: step 1/1. It functions in the pathway porphyrin-containing compound metabolism; siroheme biosynthesis; siroheme from sirohydrochlorin: step 1/1. The protein operates within porphyrin-containing compound metabolism; siroheme biosynthesis; sirohydrochlorin from precorrin-2: step 1/1. Multifunctional enzyme that catalyzes the SAM-dependent methylations of uroporphyrinogen III at position C-2 and C-7 to form precorrin-2 via precorrin-1. Then it catalyzes the NAD-dependent ring dehydrogenation of precorrin-2 to yield sirohydrochlorin. Finally, it catalyzes the ferrochelation of sirohydrochlorin to yield siroheme. The chain is Siroheme synthase 1 from Aeromonas hydrophila subsp. hydrophila (strain ATCC 7966 / DSM 30187 / BCRC 13018 / CCUG 14551 / JCM 1027 / KCTC 2358 / NCIMB 9240 / NCTC 8049).